A 327-amino-acid chain; its full sequence is GrpE protein homolog 2, mitochondrial (327 aa).

A mitochondrion-targeting transit peptide spans 1–39 (MLVLRILSRVTRNAGIRSSLSAVTLPARNQTPVFSSRFH). Positions 68–140 (SSSTSPESDE…DSESDDDELS (73 aa)) are disordered. 2 stretches are compositionally biased toward basic and acidic residues: residues 75 to 93 (SDEK…EKPT) and 103 to 113 (SESKDSVTDSA). A compositionally biased stretch (acidic residues) spans 130–140 (SDSESDDDELS).

This sequence belongs to the GrpE family. As to quaternary structure, probable component of the PAM complex, at least composed of SSC1 (mtHsp70), MGE1, TIM44, PAM16/TIM16, PAM17 and PAM18/TIM14. Interacts with SSQ1.

The protein localises to the mitochondrion matrix. In terms of biological role, essential component of the PAM complex, a complex required for the translocation of transit peptide-containing proteins from the inner membrane into the mitochondrial matrix in an ATP-dependent manner. Seems to control the nucleotide-dependent binding of mitochondrial HSP70 to substrate proteins. Binds ATP. Interacts with copper ions Cu(2+). Confers thermotolerance to long-term exposure at moderately high temperature (TMHT at 35 degrees Celsius). In Arabidopsis thaliana (Mouse-ear cress), this protein is GrpE protein homolog 2, mitochondrial.